Reading from the N-terminus, the 230-residue chain is Somatolactin (230 aa).

The N-terminal stretch at 1 to 23 (MNMMTVKQGVWAALLWPYLLAAS) is a signal peptide. 3 disulfide bridges follow: C28–C38, C88–C204, and C221–C229. N137 and N144 each carry an N-linked (GlcNAc...) asparagine glycan.

This sequence belongs to the somatotropin/prolactin family.

The protein localises to the secreted. The chain is Somatolactin from Hippoglossus hippoglossus (Atlantic halibut).